The following is a 354-amino-acid chain: Uroporphyrinogen decarboxylase (354 aa).

Substrate is bound by residues 27–31 (RQAGR), aspartate 77, tyrosine 154, threonine 209, and histidine 327.

This sequence belongs to the uroporphyrinogen decarboxylase family. In terms of assembly, homodimer.

The protein localises to the cytoplasm. The catalysed reaction is uroporphyrinogen III + 4 H(+) = coproporphyrinogen III + 4 CO2. Its pathway is porphyrin-containing compound metabolism; protoporphyrin-IX biosynthesis; coproporphyrinogen-III from 5-aminolevulinate: step 4/4. Catalyzes the decarboxylation of four acetate groups of uroporphyrinogen-III to yield coproporphyrinogen-III. In Salmonella heidelberg (strain SL476), this protein is Uroporphyrinogen decarboxylase.